Consider the following 189-residue polypeptide: Calcyphosin (189 aa).

EF-hand domains lie at 21–56, 57–92, 93–128, and 136–172; these read SGIQ…LGLV, LDTA…PMSQ, AREA…RTHP, and TEEQ…VSAS. Ca(2+)-binding residues include aspartate 34, aspartate 36, serine 38, serine 40, glutamate 45, aspartate 70, aspartate 72, serine 74, threonine 76, glutamate 81, aspartate 106, serine 108, aspartate 110, and aspartate 117. Serine 40 carries the post-translational modification Phosphoserine; by PKA.

As to quaternary structure, monomer. Does not form oligomers in the presence of calcium.

The protein resides in the cytoplasm. Functionally, calcium-binding protein. May play a role in cellular signaling events (Potential). This is Calcyphosin (CAPS) from Bos taurus (Bovine).